The sequence spans 650 residues: DNA gyrase subunit B (650 aa).

In terms of domain architecture, Toprim spans 429–543; the sequence is NELFIVEGDS…AGYVYIAQPP (115 aa). Mg(2+) contacts are provided by Glu435, Asp508, and Asp510.

This sequence belongs to the type II topoisomerase GyrB family. Heterotetramer, composed of two GyrA and two GyrB chains. In the heterotetramer, GyrA contains the active site tyrosine that forms a transient covalent intermediate with DNA, while GyrB binds cofactors and catalyzes ATP hydrolysis. It depends on Mg(2+) as a cofactor. Mn(2+) is required as a cofactor. Ca(2+) serves as cofactor.

It is found in the cytoplasm. It carries out the reaction ATP-dependent breakage, passage and rejoining of double-stranded DNA.. A type II topoisomerase that negatively supercoils closed circular double-stranded (ds) DNA in an ATP-dependent manner to modulate DNA topology and maintain chromosomes in an underwound state. Negative supercoiling favors strand separation, and DNA replication, transcription, recombination and repair, all of which involve strand separation. Also able to catalyze the interconversion of other topological isomers of dsDNA rings, including catenanes and knotted rings. Type II topoisomerases break and join 2 DNA strands simultaneously in an ATP-dependent manner. The protein is DNA gyrase subunit B of Streptococcus pyogenes serotype M18 (strain MGAS8232).